A 94-amino-acid chain; its full sequence is ESAT-6-like protein EsxI (94 aa).

The protein belongs to the WXG100 family. ESAT-6 subfamily.

The protein localises to the secreted. This is ESAT-6-like protein EsxI from Mycobacterium tuberculosis (strain ATCC 25618 / H37Rv).